A 418-amino-acid polypeptide reads, in one-letter code: Tyrosine--tRNA ligase (418 aa).

Y34 is a binding site for L-tyrosine. The short motif at 39–48 (PTADSLHLGH) is the 'HIGH' region element. Y169 and Q173 together coordinate L-tyrosine. Positions 229-233 (KFGKS) match the 'KMSKS' region motif. K232 is an ATP binding site. In terms of domain architecture, S4 RNA-binding spans 352–418 (NNIVELLVSS…GKKKYFVLTY (67 aa)).

The protein belongs to the class-I aminoacyl-tRNA synthetase family. TyrS type 1 subfamily. Homodimer.

The protein localises to the cytoplasm. The enzyme catalyses tRNA(Tyr) + L-tyrosine + ATP = L-tyrosyl-tRNA(Tyr) + AMP + diphosphate + H(+). Catalyzes the attachment of tyrosine to tRNA(Tyr) in a two-step reaction: tyrosine is first activated by ATP to form Tyr-AMP and then transferred to the acceptor end of tRNA(Tyr). The sequence is that of Tyrosine--tRNA ligase from Streptococcus pneumoniae (strain ATCC BAA-255 / R6).